We begin with the raw amino-acid sequence, 190 residues long: GTP cyclohydrolase 1 (190 aa).

Positions 80, 83, and 151 each coordinate Zn(2+).

This sequence belongs to the GTP cyclohydrolase I family. Toroid-shaped homodecamer, composed of two pentamers of five dimers.

The catalysed reaction is GTP + H2O = 7,8-dihydroneopterin 3'-triphosphate + formate + H(+). It participates in cofactor biosynthesis; 7,8-dihydroneopterin triphosphate biosynthesis; 7,8-dihydroneopterin triphosphate from GTP: step 1/1. The sequence is that of GTP cyclohydrolase 1 from Rickettsia akari (strain Hartford).